Here is a 226-residue protein sequence, read N- to C-terminus: 2,3-bisphosphoglycerate-dependent phosphoglycerate mutase (226 aa).

Residues Arg8–Asn15, Thr21–Gly22, Arg58, Glu109–Tyr112, Lys120, Arg136–Arg137, and Gly180–Asn181 each bind substrate. His9 serves as the catalytic Tele-phosphohistidine intermediate. Catalysis depends on Glu109, which acts as the Proton donor/acceptor.

This sequence belongs to the phosphoglycerate mutase family. BPG-dependent PGAM subfamily.

The catalysed reaction is (2R)-2-phosphoglycerate = (2R)-3-phosphoglycerate. It functions in the pathway carbohydrate degradation; glycolysis; pyruvate from D-glyceraldehyde 3-phosphate: step 3/5. Functionally, catalyzes the interconversion of 2-phosphoglycerate and 3-phosphoglycerate. The sequence is that of 2,3-bisphosphoglycerate-dependent phosphoglycerate mutase from Chlamydia trachomatis serovar L2 (strain ATCC VR-902B / DSM 19102 / 434/Bu).